A 137-amino-acid polypeptide reads, in one-letter code: Large-conductance mechanosensitive channel (137 aa).

The Cytoplasmic portion of the chain corresponds to 1 to 16; that stretch reads MSIIKEFREFAMRGNV. The chain crosses the membrane as a helical span at residues 17 to 45; the sequence is VDLAVGVIIGALFGKIVSSLVSDIIMPPL. Residues 46–74 lie on the Periplasmic side of the membrane; it reads GLLIGGVDFKQFALFLRNAQGGIPAVVMN. Residues 75–94 form a helical membrane-spanning segment; that stretch reads YGAFIQNIFDFIIVAFAIFI. Topologically, residues 95-137 are cytoplasmic; the sequence is AIKLMNKMRCKQEDTPAAPPKPSAEEKLLAEIRDLLKEQQTRQ.

It belongs to the MscL family. As to quaternary structure, homopentamer.

Its subcellular location is the cell inner membrane. In terms of biological role, channel that opens in response to stretch forces in the membrane lipid bilayer. Forms a nonselective ion channel with a conductance of about 4 nanosiemens. May participate in the regulation of osmotic pressure changes within the cell. The polypeptide is Large-conductance mechanosensitive channel (Pectobacterium carotovorum (Erwinia carotovora)).